Reading from the N-terminus, the 329-residue chain is Serpentine receptor class alpha-3 (329 aa).

7 consecutive transmembrane segments (helical) span residues 25-45 (LIYF…LKVI), 57-77 (ILLY…GITI), 104-124 (YLEM…GLLF), 144-164 (GIIT…IIIW), 187-207 (TMFF…SLLI), 238-258 (ICFL…GVFL), and 273-293 (FWVV…ILLI).

This sequence belongs to the nematode receptor-like protein sra family.

The protein localises to the membrane. The chain is Serpentine receptor class alpha-3 (sra-3) from Caenorhabditis elegans.